The chain runs to 543 residues: CTP synthase (543 aa).

Residues 1 to 267 are amidoligase domain; the sequence is MKQTKYIFVT…LSPIAEILDL (267 aa). Serine 15 is a CTP binding site. Serine 15 provides a ligand contact to UTP. ATP-binding positions include 16–21 and aspartate 73; that span reads SLGKGI. The Mg(2+) site is built by aspartate 73 and glutamate 141. CTP is bound by residues 148–150, 188–193, and lysine 224; these read DIE and KTKPTQ. Residues 188–193 and lysine 224 contribute to the UTP site; that span reads KTKPTQ. A Glutamine amidotransferase type-1 domain is found at 292–543; the sequence is KIAFVGKYVD…IKAAINYEDN (252 aa). Glycine 354 contributes to the L-glutamine binding site. Cysteine 381 (nucleophile; for glutamine hydrolysis) is an active-site residue. Residues 382–385, glutamate 405, and arginine 473 each bind L-glutamine; that span reads LGMQ. Catalysis depends on residues histidine 516 and glutamate 518.

Belongs to the CTP synthase family. In terms of assembly, homotetramer.

The catalysed reaction is UTP + L-glutamine + ATP + H2O = CTP + L-glutamate + ADP + phosphate + 2 H(+). It catalyses the reaction L-glutamine + H2O = L-glutamate + NH4(+). It carries out the reaction UTP + NH4(+) + ATP = CTP + ADP + phosphate + 2 H(+). It participates in pyrimidine metabolism; CTP biosynthesis via de novo pathway; CTP from UDP: step 2/2. Its activity is regulated as follows. Allosterically activated by GTP, when glutamine is the substrate; GTP has no effect on the reaction when ammonia is the substrate. The allosteric effector GTP functions by stabilizing the protein conformation that binds the tetrahedral intermediate(s) formed during glutamine hydrolysis. Inhibited by the product CTP, via allosteric rather than competitive inhibition. Its function is as follows. Catalyzes the ATP-dependent amination of UTP to CTP with either L-glutamine or ammonia as the source of nitrogen. Regulates intracellular CTP levels through interactions with the four ribonucleotide triphosphates. The polypeptide is CTP synthase (Campylobacter jejuni subsp. jejuni serotype O:23/36 (strain 81-176)).